Reading from the N-terminus, the 439-residue chain is Glucose-1-phosphate adenylyltransferase (439 aa).

Alpha-D-glucose 1-phosphate is bound by residues Gly-172, 187-188 (EK), and Ser-219.

Belongs to the bacterial/plant glucose-1-phosphate adenylyltransferase family. Homotetramer.

The enzyme catalyses alpha-D-glucose 1-phosphate + ATP + H(+) = ADP-alpha-D-glucose + diphosphate. Its pathway is glycan biosynthesis; glycogen biosynthesis. Involved in the biosynthesis of ADP-glucose, a building block required for the elongation reactions to produce glycogen. Catalyzes the reaction between ATP and alpha-D-glucose 1-phosphate (G1P) to produce pyrophosphate and ADP-Glc. This chain is Glucose-1-phosphate adenylyltransferase, found in Synechocystis sp. (strain ATCC 27184 / PCC 6803 / Kazusa).